Reading from the N-terminus, the 148-residue chain is UPF0756 membrane protein KPN78578_11500 (148 aa).

The next 4 membrane-spanning stretches (helical) occupy residues 14–34 (ALGF…LIIV), 51–71 (LTVG…SGTL), 86–106 (LLAI…VSLM), and 121–141 (VLGV…AGII).

This sequence belongs to the UPF0756 family.

It localises to the cell membrane. This is UPF0756 membrane protein KPN78578_11500 from Klebsiella pneumoniae subsp. pneumoniae (strain ATCC 700721 / MGH 78578).